A 232-amino-acid polypeptide reads, in one-letter code: MIQKSKIKDLVVFTDENNSKYLNVLNDFLSYNINIIKVFRSIDDTKVMLIDTDYGKLILKVFSPKVKRNERFFKSLLKGDYYERLFEQTQKVRNEGLNTLNDFYLLAERKTLRFVHTYIMIIEYIDGIELCDMPDIDDALKNKIQQSINALHQHGMVSGDPHRGNFIIKNGEVRIIDLSGKRASAQRKAKDRIDLERHYGIKNEIRDLGYYLLVYRKKMRNFMRRLKGKPAR.

It belongs to the protein kinase superfamily. RfaY/WaaY family.

The catalysed reaction is alpha-D-Glc-(1-&gt;3)-[L-alpha-D-Hep-(1-&gt;7)]-L-alpha-D-Hep-(1-&gt;3)-4-O-PO3(2-)-L-alpha-D-Hep-(1-&gt;5)-[alpha-Kdo-(2-&gt;4)]-alpha-Kdo-(2-&gt;6)-lipid A + ATP = alpha-D-Glc-(1-&gt;3)-[L-alpha-D-Hep-(1-&gt;7)]-4-O-PO3(2-)-L-alpha-D-Hep-(1-&gt;3)-4-O-PO3(2-)-L-alpha-D-Hep-(1-&gt;5)-[alpha-Kdo-(2-&gt;4)]-alpha-Kdo-(2-&gt;6)-lipid A + ADP + H(+). It participates in bacterial outer membrane biogenesis; LPS core biosynthesis. Kinase involved in the biosynthesis of the core oligosaccharide region of lipopolysaccharide (LPS). Catalyzes the phosphorylation of the second heptose unit (HepII) of the inner core. The chain is Lipopolysaccharide core heptose(II) kinase WaaY from Escherichia coli (strain K12).